A 353-amino-acid chain; its full sequence is Phenol hydroxylase P5 protein (353 aa).

The 2Fe-2S ferredoxin-type domain maps to 3–93; it reads YQVTIEPIGT…DMVIEADVDE (91 aa). Cys37, Cys42, Cys45, and Cys77 together coordinate [2Fe-2S] cluster. Positions 102 to 201 constitute an FAD-binding FR-type domain; sequence VQDYQATVIE…SGPYGQFFVR (100 aa).

In terms of assembly, the multicomponent enzyme phenol hydroxylase is formed by P0, P1, P2, P3, P4 and P5 polypeptides. FAD serves as cofactor. The cofactor is [2Fe-2S] cluster.

The enzyme catalyses phenol + NADPH + O2 + H(+) = catechol + NADP(+) + H2O. It functions in the pathway aromatic compound metabolism; phenol degradation. In terms of biological role, catabolizes phenol, and some of its methylated derivatives. P5 is required for growth on phenol, and for in vitro phenol hydroxylase activity. Functionally, probable electron transfer from NADPH, via FAD and the 2Fe-2S center, to the oxygenase activity site of the enzyme. The chain is Phenol hydroxylase P5 protein (mphP) from Acinetobacter pittii (strain PHEA-2).